The following is a 129-amino-acid chain: Histone H2A-III (129 aa).

Positions 1–22 are disordered; it reads MSGRGKQGGKARAKAKSRSSRA. Residue Ser2 is modified to N-acetylserine. A Phosphoserine modification is found at Ser2. Lys6 bears the N6-(2-hydroxyisobutyryl)lysine mark. Lys6 and Lys10 each carry N6-acetyllysine. Over residues 7 to 19 the composition is skewed to basic residues; the sequence is QGGKARAKAKSRS. Residue Lys10 is modified to N6-(2-hydroxyisobutyryl)lysine; alternate. Position 10 is an N6-lactoyllysine; alternate (Lys10). Lys10 carries the N6-succinyllysine modification. Residues Lys14 and Lys16 each participate in a glycyl lysine isopeptide (Lys-Gly) (interchain with G-Cter in ubiquitin) cross-link. At Lys37 the chain carries N6-(2-hydroxyisobutyryl)lysine; alternate. N6-(2-hydroxyisobutyryl)lysine is present on residues Lys75 and Lys76. The residue at position 96 (Lys96) is an N6-(2-hydroxyisobutyryl)lysine; alternate. Lys96 carries the post-translational modification N6-succinyllysine. Residue Lys96 is modified to N6-glutaryllysine; alternate. Lys100 carries the post-translational modification N6-glutaryllysine. At Gln105 the chain carries N5-methylglutamine. An N6-(2-hydroxyisobutyryl)lysine; alternate modification is found at Lys119. An N6-glutaryllysine; alternate mark is found at Lys119 and Lys120. Lys120 is covalently cross-linked (Glycyl lysine isopeptide (Lys-Gly) (interchain with G-Cter in ubiquitin)).

The protein belongs to the histone H2A family. As to quaternary structure, the nucleosome is a histone octamer containing two molecules each of H2A, H2B, H3 and H4 assembled in one H3-H4 heterotetramer and two H2A-H2B heterodimers. The octamer wraps approximately 147 bp of DNA. In terms of processing, monoubiquitination of Lys-120 (H2AK119Ub) gives a specific tag for epigenetic transcriptional repression. Following DNA double-strand breaks (DSBs), it is ubiquitinated through 'Lys-63' linkage of ubiquitin moieties, leading to the recruitment of repair proteins to sites of DNA damage. H2AK119Ub and ionizing radiation-induced 'Lys-63'-linked ubiquitination are distinct events. Phosphorylation on Ser-2 is enhanced during mitosis. Phosphorylation on Ser-2 directly represses transcription. Post-translationally, glutamine methylation at Gln-105 (H2AQ104me) by FBL is specifically dedicated to polymerase I. It is present at 35S ribosomal DNA locus and impairs binding of the FACT complex.

It is found in the nucleus. It localises to the chromosome. In terms of biological role, core component of nucleosome. Nucleosomes wrap and compact DNA into chromatin, limiting DNA accessibility to the cellular machineries which require DNA as a template. Histones thereby play a central role in transcription regulation, DNA repair, DNA replication and chromosomal stability. DNA accessibility is regulated via a complex set of post-translational modifications of histones, also called histone code, and nucleosome remodeling. The protein is Histone H2A-III of Gallus gallus (Chicken).